The sequence spans 440 residues: L-seryl-tRNA(Sec) selenium transferase (440 aa).

Residue lysine 282 is modified to N6-(pyridoxal phosphate)lysine.

Belongs to the SelA family. Pyridoxal 5'-phosphate is required as a cofactor.

The protein resides in the cytoplasm. It carries out the reaction L-seryl-tRNA(Sec) + selenophosphate + H(+) = L-selenocysteinyl-tRNA(Sec) + phosphate. It functions in the pathway aminoacyl-tRNA biosynthesis; selenocysteinyl-tRNA(Sec) biosynthesis; selenocysteinyl-tRNA(Sec) from L-seryl-tRNA(Sec) (bacterial route): step 1/1. Functionally, converts seryl-tRNA(Sec) to selenocysteinyl-tRNA(Sec) required for selenoprotein biosynthesis. The protein is L-seryl-tRNA(Sec) selenium transferase of Campylobacter jejuni subsp. doylei (strain ATCC BAA-1458 / RM4099 / 269.97).